Reading from the N-terminus, the 313-residue chain is Nucleotide-binding protein Swit_0399 (313 aa).

20–27 (GMSGSGKK) contacts ATP. GTP is bound at residue 73–76 (DSRT). Residues 289–313 (PTVRHRDLTRQKSNAEESTVPGVGS) are disordered. Residues 292–303 (RHRDLTRQKSNA) show a composition bias toward basic and acidic residues.

This sequence belongs to the RapZ-like family.

Displays ATPase and GTPase activities. The chain is Nucleotide-binding protein Swit_0399 from Rhizorhabdus wittichii (strain DSM 6014 / CCUG 31198 / JCM 15750 / NBRC 105917 / EY 4224 / RW1) (Sphingomonas wittichii).